Reading from the N-terminus, the 377-residue chain is GDP-mannose 3,5-epimerase (377 aa).

Glycine 2 is modified (N-acetylglycine). NAD(+) contacts are provided by residues 34-60 (GAGG…SDWK), aspartate 58, and aspartate 78. Residues glycine 103 and 143–145 (SAC) each bind substrate. 2 residues coordinate NAD(+): tyrosine 174 and lysine 178. Catalysis depends on tyrosine 174, which acts as the Proton acceptor. Substrate contacts are provided by residues asparagine 203, 216-218 (EKA), lysine 225, 241-243 (QTR), arginine 306, and serine 356. At serine 369 the chain carries Phosphoserine.

This sequence belongs to the NAD(P)-dependent epimerase/dehydratase family. In terms of assembly, homodimer. Interacts with chaperone Hsc70-3 protein, which may regulate epimerase activity. Requires NAD(+) as cofactor.

The catalysed reaction is GDP-alpha-D-mannose = GDP-beta-L-gulose. It catalyses the reaction GDP-beta-L-gulose = GDP-beta-L-galactose. The protein operates within cofactor biosynthesis; L-ascorbate biosynthesis via GDP-alpha-D-mannose pathway; L-ascorbate from GDP-alpha-D-mannose: step 1/5. Its activity is regulated as follows. Inhibited by GDP and GDP-D-glucose. Its function is as follows. Catalyzes a reversible epimerization of GDP-D-mannose that precedes the committed step in the biosynthesis of vitamin C (L-ascorbate), resulting in the hydrolysis of the highly energetic glycosyl-pyrophosphoryl linkage. Able to catalyze 2 distinct epimerization reactions and can release both GDP-L-galactose and GDP-L-gulose from GDP-mannose. The chain is GDP-mannose 3,5-epimerase from Arabidopsis thaliana (Mouse-ear cress).